The primary structure comprises 248 residues: MNPIFLGLNIDHVATLRQARGTRYPDPVKAALDAEMAGADSITLHLREDRRHIQDADVYRLSELRQTKINLEMAATQEMLEIALKCQPEDVCLVPEKREELTTEGGLDVASQKAWLTDYCAQLAENKTRVSLFIDADDAQIHAAKEVGAPVIEIHTGTYAELTDPAAIKTELERIRKATDLAVSLGLTVNAGHGLHYHNVQAIAAIKEIEELNIGHAIIAQAIFSGLPDAVSEMKRLMVDARQQAYLG.

Residue Asn-9 participates in 3-amino-2-oxopropyl phosphate binding. 11–12 contributes to the 1-deoxy-D-xylulose 5-phosphate binding site; it reads DH. 3-amino-2-oxopropyl phosphate is bound at residue Arg-20. His-45 (proton acceptor) is an active-site residue. 1-deoxy-D-xylulose 5-phosphate is bound by residues Arg-47 and His-52. The Proton acceptor role is filled by Glu-72. Thr-102 serves as a coordination point for 1-deoxy-D-xylulose 5-phosphate. Catalysis depends on His-193, which acts as the Proton donor. 3-amino-2-oxopropyl phosphate contacts are provided by residues Gly-194 and 215-216; that span reads GH.

Belongs to the PNP synthase family. In terms of assembly, homooctamer; tetramer of dimers.

The protein localises to the cytoplasm. It catalyses the reaction 3-amino-2-oxopropyl phosphate + 1-deoxy-D-xylulose 5-phosphate = pyridoxine 5'-phosphate + phosphate + 2 H2O + H(+). It functions in the pathway cofactor biosynthesis; pyridoxine 5'-phosphate biosynthesis; pyridoxine 5'-phosphate from D-erythrose 4-phosphate: step 5/5. Its function is as follows. Catalyzes the complicated ring closure reaction between the two acyclic compounds 1-deoxy-D-xylulose-5-phosphate (DXP) and 3-amino-2-oxopropyl phosphate (1-amino-acetone-3-phosphate or AAP) to form pyridoxine 5'-phosphate (PNP) and inorganic phosphate. The chain is Pyridoxine 5'-phosphate synthase from Hydrogenovibrio crunogenus (strain DSM 25203 / XCL-2) (Thiomicrospira crunogena).